Consider the following 321-residue polypeptide: UDP-N-acetyl-alpha-D-glucosaminuronate decarboxylase (321 aa).

NAD(+)-binding residues include G12, F13, I14, D33, N34, Y36, G38, L76, T95, A117, Y148, and K152. Catalysis depends on Y148, which acts as the Proton acceptor.

The protein belongs to the NAD(P)-dependent epimerase/dehydratase family. Homodimer. It depends on NAD(+) as a cofactor.

The catalysed reaction is UDP-2-acetamido-2-deoxy-alpha-D-glucuronate + H(+) = UDP-N-acetyl-alpha-D-xylosamine + CO2. With respect to regulation, activity is completely inhibited by NADH but not by NADPH. Functionally, decarboxylase involved in the biosynthesis of the nucleotide-sugar UDP-N-acetylxylosamine (UDP-XylNAc). Catalyzes the NAD-dependent decarboxylation of UDP-N-acetylglucosaminuronic acid (UDP-GlcNAcA) to UDP-XylNAc. Cannot use other UDP-uronates, such as UDP-glucuronic acid (UDP-GlcA) and UDP-galacturonic acid (UDP-GalA). The sequence is that of UDP-N-acetyl-alpha-D-glucosaminuronate decarboxylase from Bacillus cytotoxicus (strain DSM 22905 / CIP 110041 / 391-98 / NVH 391-98).